Here is a 540-residue protein sequence, read N- to C-terminus: Solute carrier family 22 member 7 (540 aa).

The next 12 membrane-spanning stretches (helical) occupy residues 21–41, 144–164, 172–192, 202–222, 232–252, 257–277, 344–364, 378–398, 402–422, 429–449, 462–484, and 488–510; these read LVLLALPRFLLPMHFLLPIFM, VTSTCFFIGVLLGAVVYGYLS, LLLVAYVSTLALGLMSAASVN, LTGSALAGFTIIVLPLELEWL, VISTTFWTGGVLLLTLVGYLI, WLLLAATLPCVPGIISIWWVP, VSLCCMMMWFGVNFSYYGLTL, LLFGAVEVPSKITVFFLVRLV, LTEAGMLLATALTFGISLLVS, ITALVVIGKAFSEAAFTTAYL, TGMGFTALIGRLGASLAPLVVLL, and WLLLPKLAYGGISFLAACTVLLL.

Belongs to the major facilitator (TC 2.A.1) superfamily. Organic cation transporter (TC 2.A.1.19) family. Abundant expression in male and female kidney. In kidney, expressed at the brush border of the proximal tubule S3 segment (S3) in the outer stripe and medullary rays. In kidney, expression is higher in female than male. Also expressed in female liver.

It localises to the basolateral cell membrane. It is found in the apical cell membrane. The protein localises to the cell membrane. The enzyme catalyses orotate(out) + L-glutamate(in) = orotate(in) + L-glutamate(out). The catalysed reaction is 3',5'-cyclic GMP(in) = 3',5'-cyclic GMP(out). It catalyses the reaction GMP(in) = GMP(out). It carries out the reaction 2'-deoxyguanosine(in) = 2'-deoxyguanosine(out). The enzyme catalyses GDP(in) = GDP(out). The catalysed reaction is guanosine(in) = guanosine(out). It catalyses the reaction GTP(in) = GTP(out). It carries out the reaction 3',5'-cyclic AMP(in) = 3',5'-cyclic AMP(out). The enzyme catalyses creatinine(in) = creatinine(out). The catalysed reaction is prostaglandin E2(out) = prostaglandin E2(in). It catalyses the reaction 2-oxoglutarate(in) = 2-oxoglutarate(out). It carries out the reaction glutarate(in) = glutarate(out). The enzyme catalyses urate(out) = urate(in). The catalysed reaction is estrone 3-sulfate(out) = estrone 3-sulfate(in). In terms of biological role, functions as a Na(+)-independent bidirectional multispecific transporter. Contributes to the renal and hepatic elimination of endogenous organic compounds from the systemic circulation into the urine and bile, respectively. Capable of transporting a wide range of purine and pyrimidine nucleobases, nucleosides, and nucleotides with cGMP, 2'deoxyguanosine and GMP being the preferred substrates. Functions as a pH- and chloride-independent cGMP bidirectional facilitative transporter that can regulate both intracellular and extracellular levels of cGMP and may be involved in cGMP signaling pathways. Mediates orotate/glutamate bidirectional exchange and most likely display a physiological role in hepatic release of glutamate into the blood. Involved in renal secretion and possible reabsorption of creatinine. Able to uptake prostaglandin E2 (PGE2) and may contribute to PGE2 renal excretion. Also transports alpha-ketoglutarate and urate. Unlike human hortolog, able to transport glutarate. Apart from the orotate/glutamate exchange, the counterions for the uptake of other SLC22A7/OAT2 substrates remain to be identified. This Mus musculus (Mouse) protein is Solute carrier family 22 member 7.